The primary structure comprises 99 residues: Putative regulatory protein Kole_1849 (99 aa).

Belongs to the RemA family.

The sequence is that of Putative regulatory protein Kole_1849 from Kosmotoga olearia (strain ATCC BAA-1733 / DSM 21960 / TBF 19.5.1).